The primary structure comprises 392 residues: Nucleolysin TIAR (392 aa).

RRM domains follow at residues 9 to 102 and 114 to 192; these read RTLY…WATT and FHVF…WATR. An N6-acetyllysine modification is found at Lys139. Position 218 is a phosphoserine (Ser218). The region spanning 222 to 294 is the RRM 3 domain; it reads CTVYCGGIAS…HVVKCYWGKE (73 aa). The disordered stretch occupies residues 363–392; that stretch reads GAQPPQGQAPPPVIPPPNQAGYGMASFPTQ. The segment covering 369-380 has biased composition (pro residues); sequence GQAPPPVIPPPN.

In terms of assembly, interacts with FASTK. Post-translationally, phosphorylated by MAPK14 following DNA damage, releasing TIAR from GADD45A mRNA. In terms of tissue distribution, expressed both in primordial germ cells (PGCs) and in neighboring somatic cells.

The protein resides in the nucleus. Its subcellular location is the cytoplasm. It is found in the stress granule. It localises to the cytolytic granule. RNA-binding protein involved in alternative pre-RNA splicing and in cytoplasmic stress granules formation. Shows a preference for uridine-rich RNAs. Activates splicing of alternative exons with weak 5' splice sites followed by a U-rich stretch on its own pre-mRNA and on TIA1 mRNA. Promotes the inclusion of TIA1 exon 5 to give rise to the long isoform (isoform a) of TIA1. Acts downstream of the stress-induced phosphorylation of EIF2S1/EIF2A to promote the recruitment of untranslated mRNAs to cytoplasmic stress granules (SG). Possesses nucleolytic activity against cytotoxic lymphocyte target cells. May be involved in apoptosis. In Mus musculus (Mouse), this protein is Nucleolysin TIAR (Tial1).